Reading from the N-terminus, the 20-residue chain is Dihydroorotase-like protein (20 aa).

It belongs to the metallo-dependent hydrolases superfamily. DHOase family. PyrC' subfamily. As to quaternary structure, heterododecamer of 6 active PyrB subunits and 6 non-catalytic PyrC' subunits.

Functionally, non-functional DHOase. This chain is Dihydroorotase-like protein (pyrC'), found in Pseudomonas fluorescens biotype A.